Here is a 341-residue protein sequence, read N- to C-terminus: uncharacterized protein (341 aa).

The stretch at 153–179 forms a coiled coil; sequence AYTLSEKVMNAEREAEETRETIIREAH. Polar residues predominate over residues 319–335; that stretch reads EQLQNPAPESAPSTSKT. A disordered region spans residues 319-341; the sequence is EQLQNPAPESAPSTSKTLRSKNP.

This is an uncharacterized protein from Coxiella burnetii (strain RSA 493 / Nine Mile phase I).